The sequence spans 643 residues: Extracellular metalloproteinase 4 (643 aa).

The N-terminal stretch at 1–18 is a signal peptide; it reads MHGLLLAGLLALPLNVLA. Residues 19–254 constitute a propeptide that is removed on maturation; sequence HPTESHSSGI…VHSVVDYVSA (236 aa). Residues 47 to 57 show a composition bias toward basic and acidic residues; sequence TKSDAVPKQDD. Residues 47-71 are disordered; that stretch reads TKSDAVPKQDDESFTTSSTGDDNVS. The span at 60-71 shows a compositional bias: polar residues; sequence FTTSSTGDDNVS. N-linked (GlcNAc...) asparagine glycosylation is found at Asn271 and Asn420. His437 contributes to the Zn(2+) binding site. The active site involves Glu438. His441 serves as a coordination point for Zn(2+). N-linked (GlcNAc...) asparagine glycosylation is found at Asn510 and Asn553.

It belongs to the peptidase M36 family. Requires Zn(2+) as cofactor.

It is found in the secreted. Functionally, secreted metalloproteinase probably acting as a virulence factor. The protein is Extracellular metalloproteinase 4 (MEP4) of Arthroderma benhamiae (Trichophyton mentagrophytes).